Reading from the N-terminus, the 529-residue chain is uncharacterized protein (529 aa).

The Radical SAM core domain maps to 157–410 (DFPHIICEIE…FKNRVRENID (254 aa)). Residues cysteine 171, cysteine 176, and cysteine 179 each contribute to the [4Fe-4S] cluster site.

Requires [4Fe-4S] cluster as cofactor.

This is an uncharacterized protein from Archaeoglobus fulgidus (strain ATCC 49558 / DSM 4304 / JCM 9628 / NBRC 100126 / VC-16).